The chain runs to 37 residues: Cytochrome bd-I ubiquinol oxidase subunit X (37 aa).

Residues 4–24 (FAWILGTLLACSFGVITALAL) traverse the membrane as a helical segment.

This sequence belongs to the cytochrome ubiquinol oxidase subunit X family. May be a subunit of cytochrome bd-I ubiquinol oxidase. Probably interacts with CydA and CydB.

Its subcellular location is the cell inner membrane. It catalyses the reaction 2 a ubiquinol + O2(in) + 4 H(+)(in) = 2 a ubiquinone + 2 H2O(in) + 4 H(+)(out). Its pathway is energy metabolism; oxidative phosphorylation. Required for correct functioning of cytochrome bd-I oxidase. This protein and AppX may have some functional overlap. In Escherichia coli (strain K12), this protein is Cytochrome bd-I ubiquinol oxidase subunit X (cydX).